A 436-amino-acid chain; its full sequence is 3-ketoacyl-CoA thiolase (436 aa).

Residue cysteine 99 is the Acyl-thioester intermediate of the active site. Active-site proton acceptor residues include histidine 392 and cysteine 422.

It belongs to the thiolase-like superfamily. Thiolase family. In terms of assembly, heterotetramer of two alpha chains (FadJ) and two beta chains (FadI).

The protein resides in the cytoplasm. The catalysed reaction is an acyl-CoA + acetyl-CoA = a 3-oxoacyl-CoA + CoA. It participates in lipid metabolism; fatty acid beta-oxidation. Functionally, catalyzes the final step of fatty acid oxidation in which acetyl-CoA is released and the CoA ester of a fatty acid two carbons shorter is formed. This is 3-ketoacyl-CoA thiolase from Yersinia enterocolitica serotype O:8 / biotype 1B (strain NCTC 13174 / 8081).